Here is a 493-residue protein sequence, read N- to C-terminus: Glutamyl-tRNA(Gln) amidotransferase subunit A (493 aa).

Active-site charge relay system residues include Lys79 and Ser159. Ser183 serves as the catalytic Acyl-ester intermediate.

This sequence belongs to the amidase family. GatA subfamily. As to quaternary structure, heterotrimer of A, B and C subunits.

It catalyses the reaction L-glutamyl-tRNA(Gln) + L-glutamine + ATP + H2O = L-glutaminyl-tRNA(Gln) + L-glutamate + ADP + phosphate + H(+). Functionally, allows the formation of correctly charged Gln-tRNA(Gln) through the transamidation of misacylated Glu-tRNA(Gln) in organisms which lack glutaminyl-tRNA synthetase. The reaction takes place in the presence of glutamine and ATP through an activated gamma-phospho-Glu-tRNA(Gln). This Brucella abortus (strain S19) protein is Glutamyl-tRNA(Gln) amidotransferase subunit A.